The primary structure comprises 406 residues: Argininosuccinate synthase (406 aa).

Residues 11–19 (AYSGGLDTS) and alanine 38 contribute to the ATP site. L-citrulline is bound by residues tyrosine 91 and serine 96. ATP is bound at residue glycine 121. L-aspartate-binding residues include threonine 123, asparagine 127, and aspartate 128. An L-citrulline-binding site is contributed by asparagine 127. 5 residues coordinate L-citrulline: arginine 131, serine 181, serine 190, glutamate 266, and tyrosine 278.

It belongs to the argininosuccinate synthase family. Type 1 subfamily. In terms of assembly, homotetramer.

The protein resides in the cytoplasm. It carries out the reaction L-citrulline + L-aspartate + ATP = 2-(N(omega)-L-arginino)succinate + AMP + diphosphate + H(+). It functions in the pathway amino-acid biosynthesis; L-arginine biosynthesis; L-arginine from L-ornithine and carbamoyl phosphate: step 2/3. This is Argininosuccinate synthase from Campylobacter lari (strain RM2100 / D67 / ATCC BAA-1060).